The sequence spans 397 residues: MNYAYPDEKGHYGIYGGRYVPETLMQSVLELEEAYKEAMEDEEFQKELNHYLKTYVGRETPLYFAENMTEYCGGAKIYLKREDLNHTGAHKINNTIGQALLAVRMGKKKVVAETGAGQHGVATATVCALLGLECVIFMGEEDVRRQKLNVFRMELLGAKVESVAAGSGTLKDAVNEALRYWVSHVHDTHYIMGSVLGPHPFPQIVRDFQSVIGNETKKQYEALEGKLPEAVVACIGGGSNAMGMFYPFVHDEEVALYGVEAAGKGVHTEKHAATLTKGSVGVLHGSMMYLLQNEEGQIQEAHSISAGLDYPGVGPEHSLLKDIGRVSYHSITDDEALEAFQLLTKKEGIIPALESSHAVAYALKLAPQMKKDEGLVICLSGRGDKDVESIKRYMEEV.

At Lys-91 the chain carries N6-(pyridoxal phosphate)lysine.

The protein belongs to the TrpB family. As to quaternary structure, tetramer of two alpha and two beta chains. Pyridoxal 5'-phosphate is required as a cofactor.

The enzyme catalyses (1S,2R)-1-C-(indol-3-yl)glycerol 3-phosphate + L-serine = D-glyceraldehyde 3-phosphate + L-tryptophan + H2O. The protein operates within amino-acid biosynthesis; L-tryptophan biosynthesis; L-tryptophan from chorismate: step 5/5. Its function is as follows. The beta subunit is responsible for the synthesis of L-tryptophan from indole and L-serine. The chain is Tryptophan synthase beta chain from Bacillus cereus (strain AH187).